Reading from the N-terminus, the 878-residue chain is Bifunctional heparan sulfate N-deacetylase/N-sulfotransferase 1 (878 aa).

Residues 1-17 lie on the Cytoplasmic side of the membrane; that stretch reads MSLSLKTRRFGRPVRPQ. The tract at residues 1–169 is sufficient for localization to Golgi membrane; that stretch reads MSLSLKTRRF…VEYGVGIIGF (169 aa). The chain crosses the membrane as a helical; Signal-anchor for type II membrane protein span at residues 18 to 38; it reads LVLLLLFALCLLSVFISAYYL. Over 39-878 the chain is Lumenal; that stretch reads YGWKRGLEPS…WLREELQNTR (840 aa). Positions 40–594 are heparan sulfate N-deacetylase 1; it reads GWKRGLEPSG…KRHKDIWSKE (555 aa). N-linked (GlcNAc...) asparagine glycosylation is found at Asn231, Asn347, and Asn397. Residues 595 to 878 are heparan sulfate N-sulfotransferase 1; it reads KTCDRFPKLL…WLREELQNTR (284 aa). Lys610 acts as the For sulfotransferase activity in catalysis. 610–614 contacts adenosine 3',5'-bisphosphate; sequence KTGTT. A glycan (N-linked (GlcNAc...) asparagine) is linked at Asn663. Adenosine 3',5'-bisphosphate is bound by residues Ser708 and Trp813. Cys814 and Cys824 form a disulfide bridge. 829–833 contacts adenosine 3',5'-bisphosphate; that stretch reads KGRKY.

This sequence belongs to the sulfotransferase 1 family. NDST subfamily. As to quaternary structure, monomer.

It is found in the golgi apparatus membrane. It localises to the golgi apparatus. Its subcellular location is the trans-Golgi network membrane. It carries out the reaction alpha-D-glucosaminyl-[heparan sulfate](n) + 3'-phosphoadenylyl sulfate = N-sulfo-alpha-D-glucosaminyl-[heparan sulfate](n) + adenosine 3',5'-bisphosphate + 2 H(+). Its pathway is glycan metabolism; heparan sulfate biosynthesis. The protein operates within glycan metabolism; heparin biosynthesis. Functionally, essential bifunctional enzyme that catalyzes both the N-deacetylation and the N-sulfation of glucosamine (GlcNAc) of the glycosaminoglycan in heparan sulfate. Modifies the GlcNAc-GlcA disaccharide repeating sugar backbone to make N-sulfated heparosan, a prerequisite substrate for later modifications in heparin biosynthesis. Plays a role in determining the extent and pattern of sulfation of heparan sulfate. The sequence is that of Bifunctional heparan sulfate N-deacetylase/N-sulfotransferase 1 (ndst1) from Xenopus laevis (African clawed frog).